The chain runs to 313 residues: Olfactory receptor 2B6 (313 aa).

At 1–27 the chain is on the extracellular side; it reads MSWANESITGEFVLLGFSDQPWLEFPL. Residue N5 is glycosylated (N-linked (GlcNAc...) asparagine). The chain crosses the membrane as a helical span at residues 28–48; sequence FVVFLTSYIVTIFGNLNIILV. The Cytoplasmic portion of the chain corresponds to 49–57; sequence SHLDPKLHT. A helical membrane pass occupies residues 58–78; the sequence is PMYFFLTNLSVIDLCYITCTV. At 79–97 the chain is on the extracellular side; that stretch reads PQMLVNLRSIRKVISFGGC. C97 and C189 form a disulfide bridge. The helical transmembrane segment at 98–118 threads the bilayer; the sequence is VVQLFMFLALGATECVLLPVM. Topologically, residues 119–143 are cytoplasmic; it reads SFDRFVAICRPLHYSVIMHQRLCLQ. The helical transmembrane segment at 144–164 threads the bilayer; it reads LAAVSWIIGFGNSVWLSILTL. Over 165–200 the chain is Extracellular; sequence QLPRCGHYVIDHFLCEVPALLKLSCVDVTANEAELF. The chain crosses the membrane as a helical span at residues 201 to 221; sequence FVSVFFHLTPLSLILTSYAFI. The Cytoplasmic portion of the chain corresponds to 222 to 244; sequence ARAILKIQSAEGRQKAFGTCSSH. The helical transmembrane segment at 245–265 threads the bilayer; the sequence is LIVVSLFYGTALSVYFLPPSP. The Extracellular portion of the chain corresponds to 266-271; that stretch reads HSKNRR. Residues 272–292 form a helical membrane-spanning segment; it reads KMVPLFYGIIAPMLNPLIYTL. Over 293-313 the chain is Cytoplasmic; that stretch reads RNKEVKDAFKRLIKRVFLSKN.

Belongs to the G-protein coupled receptor 1 family.

Its subcellular location is the cell membrane. In terms of biological role, odorant receptor. This chain is Olfactory receptor 2B6, found in Mus musculus (Mouse).